Reading from the N-terminus, the 772-residue chain is Chondroitin sulfate glucuronyltransferase (772 aa).

Residues 1 to 6 lie on the Cytoplasmic side of the membrane; it reads MRLSSL. A helical; Signal-anchor for type II membrane protein membrane pass occupies residues 7 to 29; sequence LALLRPALPLILGLSLGCSLSLL. The Lumenal portion of the chain corresponds to 30 to 772; that stretch reads RVSWIQGEGE…LFEQEQANST (743 aa). Residues asparagine 121 and asparagine 342 are each glycosylated (N-linked (GlcNAc...) asparagine). The segment at 629-662 is disordered; that stretch reads ALSPQRSPPGPPGAGPDPPSPPGADPSRGAPIGG. A compositionally biased stretch (pro residues) spans 634–652; sequence RSPPGPPGAGPDPPSPPGA.

It belongs to the chondroitin N-acetylgalactosaminyltransferase family. In terms of tissue distribution, ubiquitous. Highly expressed in placenta, small intestine and pancreas.

The protein localises to the golgi apparatus. It is found in the golgi stack membrane. The catalysed reaction is 3-O-(beta-D-GalNAc-(1-&gt;4)-beta-D-GlcA-(1-&gt;3)-beta-D-Gal-(1-&gt;3)-beta-D-Gal-(1-&gt;4)-beta-D-Xyl)-L-seryl-[protein] + UDP-alpha-D-glucuronate = 3-O-(beta-D-GlcA-(1-&gt;3)-beta-D-GalNAc-(1-&gt;4)-beta-D-GlcA-(1-&gt;3)-beta-D-Gal-(1-&gt;3)-beta-D-Gal-(1-&gt;4)-beta-D-Xyl)-L-seryl-[protein] + UDP + H(+). It catalyses the reaction 3-O-{[beta-D-GalNAc-(1-&gt;4)-beta-D-GlcA-(1-&gt;3)](n)-beta-D-GalNAc-(1-&gt;4)-beta-D-GlcA-(1-&gt;3)-beta-D-Gal-(1-&gt;3)-beta-D-Gal-(1-&gt;4)-beta-D-Xyl}-L-seryl-[protein] + UDP-alpha-D-glucuronate = 3-O-{beta-D-GlcA-(1-&gt;3)-[beta-D-GalNAc-(1-&gt;4)-beta-D-GlcA-(1-&gt;3)](n)-beta-D-GalNAc-(1-&gt;4)-beta-D-GlcA-(1-&gt;3)-beta-D-Gal-(1-&gt;3)-beta-D-Gal-(1-&gt;4)-beta-D-Xyl}-L-seryl-[protein] + UDP + H(+). Functionally, transfers glucuronic acid (GlcUA) from UDP-GlcUA to N-acetylgalactosamine residues on the non-reducing end of the elongating chondroitin polymer. Has no N-acetylgalactosaminyltransferase activity. The polypeptide is Chondroitin sulfate glucuronyltransferase (CHPF2) (Homo sapiens (Human)).